The sequence spans 233 residues: Antilisterial bacteriocin subtilosin biosynthesis protein AlbG (233 aa).

The next 5 membrane-spanning stretches (helical) occupy residues 4 to 24 (STVF…FGWV), 46 to 66 (GLLA…LHYV), 116 to 136 (TYVM…FEIV), 145 to 165 (TPPI…LFYM), and 192 to 212 (IGWM…LAAI).

The protein localises to the cell membrane. Its function is as follows. Involved in the production of the bacteriocin subtilosin. This chain is Antilisterial bacteriocin subtilosin biosynthesis protein AlbG (albG), found in Bacillus subtilis.